The primary structure comprises 492 residues: Cobyric acid synthase (492 aa).

The GATase cobBQ-type domain maps to 252 to 440; that stretch reads QLNVVVPVLT…LHGIFEQTEA (189 aa). The active-site Nucleophile is the Cys333. The active site involves His432.

This sequence belongs to the CobB/CobQ family. CobQ subfamily.

Its pathway is cofactor biosynthesis; adenosylcobalamin biosynthesis. Catalyzes amidations at positions B, D, E, and G on adenosylcobyrinic A,C-diamide. NH(2) groups are provided by glutamine, and one molecule of ATP is hydrogenolyzed for each amidation. The chain is Cobyric acid synthase from Photobacterium profundum (strain SS9).